The chain runs to 221 residues: Urease accessory protein UreF (221 aa).

It belongs to the UreF family. UreD, UreF and UreG form a complex that acts as a GTP-hydrolysis-dependent molecular chaperone, activating the urease apoprotein by helping to assemble the nickel containing metallocenter of UreC. The UreE protein probably delivers the nickel.

It localises to the cytoplasm. In terms of biological role, required for maturation of urease via the functional incorporation of the urease nickel metallocenter. This is Urease accessory protein UreF from Aliivibrio fischeri (strain ATCC 700601 / ES114) (Vibrio fischeri).